A 405-amino-acid chain; its full sequence is Deoxyguanosinetriphosphate triphosphohydrolase-like protein (405 aa).

Residues 75–219 (RLTHTIEVAQ…AAIADDIAYN (145 aa)) form the HD domain.

This sequence belongs to the dGTPase family. Type 2 subfamily.

This Rhizobium etli (strain ATCC 51251 / DSM 11541 / JCM 21823 / NBRC 15573 / CFN 42) protein is Deoxyguanosinetriphosphate triphosphohydrolase-like protein.